The following is a 428-amino-acid chain: Dihydroorotase (428 aa).

2 residues coordinate Zn(2+): His-61 and His-63. Substrate contacts are provided by residues 63 to 65 (HLR) and Asn-95. 3 residues coordinate Zn(2+): Asp-153, His-180, and His-233. Asn-279 provides a ligand contact to substrate. Residue Asp-306 participates in Zn(2+) binding. Asp-306 is a catalytic residue. Residues His-310 and 324–325 (FG) contribute to the substrate site.

The protein belongs to the metallo-dependent hydrolases superfamily. DHOase family. Class I DHOase subfamily. The cofactor is Zn(2+).

It carries out the reaction (S)-dihydroorotate + H2O = N-carbamoyl-L-aspartate + H(+). The protein operates within pyrimidine metabolism; UMP biosynthesis via de novo pathway; (S)-dihydroorotate from bicarbonate: step 3/3. Catalyzes the reversible cyclization of carbamoyl aspartate to dihydroorotate. The polypeptide is Dihydroorotase (Geobacillus thermodenitrificans (strain NG80-2)).